A 136-amino-acid polypeptide reads, in one-letter code: Ribonuclease P protein component (136 aa).

Positions 39-59 (LPDVSSSKPARDTGAEQTSAP) are disordered.

The protein belongs to the RnpA family. Consists of a catalytic RNA component (M1 or rnpB) and a protein subunit.

The catalysed reaction is Endonucleolytic cleavage of RNA, removing 5'-extranucleotides from tRNA precursor.. In terms of biological role, RNaseP catalyzes the removal of the 5'-leader sequence from pre-tRNA to produce the mature 5'-terminus. It can also cleave other RNA substrates such as 4.5S RNA. The protein component plays an auxiliary but essential role in vivo by binding to the 5'-leader sequence and broadening the substrate specificity of the ribozyme. In Salinispora tropica (strain ATCC BAA-916 / DSM 44818 / JCM 13857 / NBRC 105044 / CNB-440), this protein is Ribonuclease P protein component.